The following is a 425-amino-acid chain: Probable proline--tRNA ligase, mitochondrial (425 aa).

Belongs to the class-II aminoacyl-tRNA synthetase family.

The protein resides in the mitochondrion. The enzyme catalyses tRNA(Pro) + L-proline + ATP = L-prolyl-tRNA(Pro) + AMP + diphosphate. The polypeptide is Probable proline--tRNA ligase, mitochondrial (Schizosaccharomyces pombe (strain 972 / ATCC 24843) (Fission yeast)).